Consider the following 540-residue polypeptide: Tyrosinase (540 aa).

An N-terminal signal peptide occupies residues Met1 to Ser19. The Lumenal, melanosome segment spans residues Gln20–Trp480. The N-linked (GlcNAc...) asparagine glycan is linked to Asn87. Cu cation contacts are provided by His182, His205, and His214. Asn233, Asn293, and Asn340 each carry an N-linked (GlcNAc...) asparagine glycan. His366 and His370 together coordinate Cu cation. Asn374 carries an N-linked (GlcNAc...) asparagine glycan. Position 393 (His393) interacts with Cu cation. The chain crosses the membrane as a helical span at residues Leu481–Phe501. Over Ala502–Leu540 the chain is Cytoplasmic. Residues Lys511–Leu540 are disordered. Positions Ser527–Leu540 are enriched in low complexity.

This sequence belongs to the tyrosinase family. Requires Cu(2+) as cofactor.

The protein resides in the melanosome membrane. The enzyme catalyses 2 L-dopa + O2 = 2 L-dopaquinone + 2 H2O. The catalysed reaction is L-tyrosine + O2 = L-dopaquinone + H2O. This is a copper-containing oxidase that functions in the formation of pigments such as melanins and other polyphenolic compounds. This is Tyrosinase (tyr) from Oryzias latipes (Japanese rice fish).